A 247-amino-acid chain; its full sequence is MVTTTPENEVLTSTSAVTGLPQKRYYRQRAHSNPIADHCFDYPARPEDVDWRSLYPSIRADQEVSFADIGCGYGGFLVTLGELFPEKISIGMEIRVKVSDYVLDRITALRQKSSGTGAYQNIACLRTNAMKYLPNYFRKGQLEKMFFLYPDPHFKRAKHKWRIINQALLSEYAYVLRKGGLVYTMTDVEDLHNWIVTHMDEHPLYERLDEEEANTDPITPKLYQSSEEGAKVVRNKGDHFLAIFRRL.

S-adenosyl-L-methionine is bound by residues Gly-70, 93-94, 128-129, and Leu-148; these read EI and NA. Asp-151 is a catalytic residue. 226 to 228 provides a ligand contact to S-adenosyl-L-methionine; the sequence is SEE.

Belongs to the class I-like SAM-binding methyltransferase superfamily. TrmB family.

Its subcellular location is the nucleus. The catalysed reaction is guanosine(46) in tRNA + S-adenosyl-L-methionine = N(7)-methylguanosine(46) in tRNA + S-adenosyl-L-homocysteine. It functions in the pathway tRNA modification; N(7)-methylguanine-tRNA biosynthesis. Its function is as follows. Catalyzes the formation of N(7)-methylguanine at position 46 (m7G46) in tRNA. The sequence is that of tRNA (guanine-N(7)-)-methyltransferase from Drosophila persimilis (Fruit fly).